The primary structure comprises 192 residues: Ribosome maturation factor RimM (192 aa).

A PRC barrel domain is found at 115-189 (EGEYYLSDLI…RIEITPPKGL (75 aa)).

It belongs to the RimM family. As to quaternary structure, binds ribosomal protein uS19.

It localises to the cytoplasm. Its function is as follows. An accessory protein needed during the final step in the assembly of 30S ribosomal subunit, possibly for assembly of the head region. Essential for efficient processing of 16S rRNA. May be needed both before and after RbfA during the maturation of 16S rRNA. It has affinity for free ribosomal 30S subunits but not for 70S ribosomes. The sequence is that of Ribosome maturation factor RimM from Acaryochloris marina (strain MBIC 11017).